A 117-amino-acid polypeptide reads, in one-letter code: MELGLRWVFLVAILEGVQCEVQLVESGGGLVKPGGSLRLSCAASGFTFSSYSMNWVRQAPGKGLEWVSSISSSSSYIYYADSVKGRFTISRDNAKNSLYLQMNSLRAEDTAVYYCAR.

Positions 1–19 are cleaved as a signal peptide; the sequence is MELGLRWVFLVAILEGVQC. The segment at 20–44 is framework-1; sequence EVQLVESGGGLVKPGGSLRLSCAAS. Positions 20–117 constitute an Ig-like domain; that stretch reads EVQLVESGGG…EDTAVYYCAR (98 aa). A disulfide bond links Cys41 and Cys115. A complementarity-determining-1 region spans residues 45-52; sequence GFTFSSYS. The segment at 53–69 is framework-2; it reads MNWVRQAPGKGLEWVSS. Residues 70-77 are complementarity-determining-2; sequence ISSSSSYI. A framework-3 region spans residues 78 to 115; it reads YYADSVKGRFTISRDNAKNSLYLQMNSLRAEDTAVYYC. The segment at 116–117 is complementarity-determining-3; the sequence is AR.

In terms of assembly, immunoglobulins are composed of two identical heavy chains and two identical light chains; disulfide-linked.

Its subcellular location is the secreted. It localises to the cell membrane. In terms of biological role, v region of the variable domain of immunoglobulin heavy chains that participates in the antigen recognition. Immunoglobulins, also known as antibodies, are membrane-bound or secreted glycoproteins produced by B lymphocytes. In the recognition phase of humoral immunity, the membrane-bound immunoglobulins serve as receptors which, upon binding of a specific antigen, trigger the clonal expansion and differentiation of B lymphocytes into immunoglobulins-secreting plasma cells. Secreted immunoglobulins mediate the effector phase of humoral immunity, which results in the elimination of bound antigens. The antigen binding site is formed by the variable domain of one heavy chain, together with that of its associated light chain. Thus, each immunoglobulin has two antigen binding sites with remarkable affinity for a particular antigen. The variable domains are assembled by a process called V-(D)-J rearrangement and can then be subjected to somatic hypermutations which, after exposure to antigen and selection, allow affinity maturation for a particular antigen. The sequence is that of Immunoglobulin heavy variable 3-21 from Homo sapiens (Human).